Consider the following 1465-residue polypeptide: Gag-Pol polyprotein (1465 aa).

A lipid anchor (N-myristoyl glycine; by host) is attached at Gly-2. The interval Val-7 to Leu-31 is interaction with Gp41. Residues Leu-16 to Arg-22 carry the Nuclear export signal motif. Positions Lys-26–Lys-32 match the Nuclear localization signal motif. Positions Gln-105–Lys-114 are enriched in basic and acidic residues. The disordered stretch occupies residues Gln-105–Asn-129. Tyr-130 carries the post-translational modification Phosphotyrosine; by host. Positions Asn-186–Gln-223 are interaction with human PPIA/CYPA and NUP153. Residues Tyr-274–Met-360 are dimerization/Multimerization of capsid protein p24. 2 CCHC-type zinc fingers span residues Val-388 to Ala-405 and Gln-409 to Glu-426. Residues Ala-441 to Arg-508 form a disordered region. The segment covering Asp-484–Glu-501 has biased composition (basic and acidic residues). The dimerization of protease stretch occupies residues Pro-513–Leu-517. The Peptidase A2 domain maps to Val-532–Ile-601. Asp-537 acts as the For protease activity; shared with dimeric partner in catalysis. Dimerization of protease regions lie at residues Gly-561–Asn-567 and Asn-600–Pro-612. The region spanning Glu-655–Leu-844 is the Reverse transcriptase domain. Mg(2+)-binding residues include Asp-720, Asp-795, and Asp-796. The RT 'primer grip' stretch occupies residues Phe-837 to Trp-845. The Tryptophan repeat motif motif lies at Trp-1007–Trp-1023. The region spanning Leu-1043–Arg-1166 is the RNase H type-1 domain. Mg(2+)-binding residues include Asp-1052, Glu-1087, Asp-1107, and Asp-1158. An Integrase-type zinc finger spans residues Glu-1172–Gln-1213. Zn(2+)-binding residues include His-1181, His-1185, Cys-1209, and Cys-1212. In terms of domain architecture, Integrase catalytic spans Gln-1222 to Ile-1373. Positions 1233, 1285, and 1321 each coordinate Mg(2+). Positions Phe-1392–His-1439 form a DNA-binding region, integrase-type.

In terms of assembly, homotrimer; further assembles as hexamers of trimers. Interacts with gp41 (via C-terminus). Interacts with host CALM1; this interaction induces a conformational change in the Matrix protein, triggering exposure of the myristate group. Interacts with host AP3D1; this interaction allows the polyprotein trafficking to multivesicular bodies during virus assembly. Part of the pre-integration complex (PIC) which is composed of viral genome, matrix protein, Vpr and integrase. As to quaternary structure, homodimer; the homodimer further multimerizes as homohexamers or homopentamers. Interacts with human PPIA/CYPA. Interacts with human NUP153. Interacts with host PDZD8; this interaction stabilizes the capsid. Interacts with monkey TRIM5; this interaction destabilizes the capsid. Homodimer, whose active site consists of two apposed aspartic acid residues. In terms of assembly, heterodimer of p66 RT and p51 RT (RT p66/p51). Heterodimerization of RT is essential for DNA polymerase activity. The overall folding of the subdomains is similar in p66 RT and p51 RT but the spatial arrangements of the subdomains are dramatically different. As to quaternary structure, homotetramer; may further associate as a homohexadecamer. Part of the pre-integration complex (PIC) which is composed of viral genome, matrix protein, Vpr and integrase. Interacts with human SMARCB1/INI1 and human PSIP1/LEDGF isoform 1. Interacts with human KPNA3; this interaction might play a role in nuclear import of the pre-integration complex. Interacts with human NUP153; this interaction might play a role in nuclear import of the pre-integration complex. Mg(2+) is required as a cofactor. Post-translationally, specific enzymatic cleavages by the viral protease yield mature proteins. The protease is released by autocatalytic cleavage. The polyprotein is cleaved during and after budding, this process is termed maturation. Proteolytic cleavage of p66 RT removes the RNase H domain to yield the p51 RT subunit. Nucleocapsid protein p7 might be further cleaved after virus entry.

It is found in the host cell membrane. The protein localises to the host endosome. The protein resides in the host multivesicular body. Its subcellular location is the virion membrane. It localises to the host nucleus. It is found in the host cytoplasm. The protein localises to the virion. It catalyses the reaction Endopeptidase for which the P1 residue is preferably hydrophobic.. It carries out the reaction Endohydrolysis of RNA in RNA/DNA hybrids. Three different cleavage modes: 1. sequence-specific internal cleavage of RNA. Human immunodeficiency virus type 1 and Moloney murine leukemia virus enzymes prefer to cleave the RNA strand one nucleotide away from the RNA-DNA junction. 2. RNA 5'-end directed cleavage 13-19 nucleotides from the RNA end. 3. DNA 3'-end directed cleavage 15-20 nucleotides away from the primer terminus.. The enzyme catalyses 3'-end directed exonucleolytic cleavage of viral RNA-DNA hybrid.. The catalysed reaction is DNA(n) + a 2'-deoxyribonucleoside 5'-triphosphate = DNA(n+1) + diphosphate. Its activity is regulated as follows. Protease: The viral protease is inhibited by many synthetic protease inhibitors (PIs), such as amprenavir, atazanavir, indinavir, loprinavir, nelfinavir, ritonavir and saquinavir. Use of protease inhibitors in tritherapy regimens permit more ambitious therapeutic strategies. Reverse transcriptase/ribonuclease H: RT can be inhibited either by nucleoside RT inhibitors (NRTIs) or by non nucleoside RT inhibitors (NNRTIs). NRTIs act as chain terminators, whereas NNRTIs inhibit DNA polymerization by binding a small hydrophobic pocket near the RT active site and inducing an allosteric change in this region. Classical NRTIs are abacavir, adefovir (PMEA), didanosine (ddI), lamivudine (3TC), stavudine (d4T), tenofovir (PMPA), zalcitabine (ddC), and zidovudine (AZT). Classical NNRTIs are atevirdine (BHAP U-87201E), delavirdine, efavirenz (DMP-266), emivirine (I-EBU), and nevirapine (BI-RG-587). The tritherapies used as a basic effective treatment of AIDS associate two NRTIs and one NNRTI. Mediates, with Gag polyprotein, the essential events in virion assembly, including binding the plasma membrane, making the protein-protein interactions necessary to create spherical particles, recruiting the viral Env proteins, and packaging the genomic RNA via direct interactions with the RNA packaging sequence (Psi). Gag-Pol polyprotein may regulate its own translation, by the binding genomic RNA in the 5'-UTR. At low concentration, the polyprotein would promote translation, whereas at high concentration, the polyprotein would encapsidate genomic RNA and then shut off translation. Its function is as follows. Targets the polyprotein to the plasma membrane via a multipartite membrane-binding signal, that includes its myristoylated N-terminus. Matrix protein is part of the pre-integration complex. Implicated in the release from host cell mediated by Vpu. Binds to RNA. Functionally, forms the conical core that encapsulates the genomic RNA-nucleocapsid complex in the virion. Most core are conical, with only 7% tubular. The core is constituted by capsid protein hexamer subunits. The core is disassembled soon after virion entry. Host restriction factors such as TRIM5-alpha or TRIMCyp bind retroviral capsids and cause premature capsid disassembly, leading to blocks in reverse transcription. Capsid restriction by TRIM5 is one of the factors which restricts HIV-1 to the human species. Host PIN1 apparently facilitates the virion uncoating. On the other hand, interactions with PDZD8 or CYPA stabilize the capsid. In terms of biological role, encapsulates and protects viral dimeric unspliced genomic RNA (gRNA). Binds these RNAs through its zinc fingers. Acts as a nucleic acid chaperone which is involved in rearangement of nucleic acid secondary structure during gRNA retrotranscription. Also facilitates template switch leading to recombination. As part of the polyprotein, participates in gRNA dimerization, packaging, tRNA incorporation and virion assembly. Aspartyl protease that mediates proteolytic cleavages of Gag and Gag-Pol polyproteins during or shortly after the release of the virion from the plasma membrane. Cleavages take place as an ordered, step-wise cascade to yield mature proteins. This process is called maturation. Displays maximal activity during the budding process just prior to particle release from the cell. Also cleaves Nef and Vif, probably concomitantly with viral structural proteins on maturation of virus particles. Hydrolyzes host EIF4GI and PABP1 in order to shut off the capped cellular mRNA translation. The resulting inhibition of cellular protein synthesis serves to ensure maximal viral gene expression and to evade host immune response. Its function is as follows. Multifunctional enzyme that converts the viral RNA genome into dsDNA in the cytoplasm, shortly after virus entry into the cell. This enzyme displays a DNA polymerase activity that can copy either DNA or RNA templates, and a ribonuclease H (RNase H) activity that cleaves the RNA strand of RNA-DNA heteroduplexes in a partially processive 3' to 5' endonucleasic mode. Conversion of viral genomic RNA into dsDNA requires many steps. A tRNA(3)-Lys binds to the primer-binding site (PBS) situated at the 5'-end of the viral RNA. RT uses the 3' end of the tRNA primer to perform a short round of RNA-dependent minus-strand DNA synthesis. The reading proceeds through the U5 region and ends after the repeated (R) region which is present at both ends of viral RNA. The portion of the RNA-DNA heteroduplex is digested by the RNase H, resulting in a ssDNA product attached to the tRNA primer. This ssDNA/tRNA hybridizes with the identical R region situated at the 3' end of viral RNA. This template exchange, known as minus-strand DNA strong stop transfer, can be either intra- or intermolecular. RT uses the 3' end of this newly synthesized short ssDNA to perform the RNA-dependent minus-strand DNA synthesis of the whole template. RNase H digests the RNA template except for two polypurine tracts (PPTs) situated at the 5'-end and near the center of the genome. It is not clear if both polymerase and RNase H activities are simultaneous. RNase H probably can proceed both in a polymerase-dependent (RNA cut into small fragments by the same RT performing DNA synthesis) and a polymerase-independent mode (cleavage of remaining RNA fragments by free RTs). Secondly, RT performs DNA-directed plus-strand DNA synthesis using the PPTs that have not been removed by RNase H as primers. PPTs and tRNA primers are then removed by RNase H. The 3' and 5' ssDNA PBS regions hybridize to form a circular dsDNA intermediate. Strand displacement synthesis by RT to the PBS and PPT ends produces a blunt ended, linear dsDNA copy of the viral genome that includes long terminal repeats (LTRs) at both ends. Functionally, catalyzes viral DNA integration into the host chromosome, by performing a series of DNA cutting and joining reactions. This enzyme activity takes place after virion entry into a cell and reverse transcription of the RNA genome in dsDNA. The first step in the integration process is 3' processing. This step requires a complex comprising the viral genome, matrix protein, Vpr and integrase. This complex is called the pre-integration complex (PIC). The integrase protein removes 2 nucleotides from each 3' end of the viral DNA, leaving recessed CA OH's at the 3' ends. In the second step, the PIC enters cell nucleus. This process is mediated through integrase and Vpr proteins, and allows the virus to infect a non dividing cell. This ability to enter the nucleus is specific of lentiviruses, other retroviruses cannot and rely on cell division to access cell chromosomes. In the third step, termed strand transfer, the integrase protein joins the previously processed 3' ends to the 5' ends of strands of target cellular DNA at the site of integration. The 5'-ends are produced by integrase-catalyzed staggered cuts, 5 bp apart. A Y-shaped, gapped, recombination intermediate results, with the 5'-ends of the viral DNA strands and the 3' ends of target DNA strands remaining unjoined, flanking a gap of 5 bp. The last step is viral DNA integration into host chromosome. This involves host DNA repair synthesis in which the 5 bp gaps between the unjoined strands are filled in and then ligated. Since this process occurs at both cuts flanking the HIV genome, a 5 bp duplication of host DNA is produced at the ends of HIV-1 integration. Alternatively, Integrase may catalyze the excision of viral DNA just after strand transfer, this is termed disintegration. This chain is Gag-Pol polyprotein (gag-pol), found in Human immunodeficiency virus type 2 subtype B (isolate D205) (HIV-2).